The chain runs to 168 residues: Photosystem I assembly protein Ycf3 (168 aa).

TPR repeat units follow at residues 35–68 (AFTY…EIDP), 72–105 (SYIL…NPFL), and 120–153 (GEQA…TPGN).

The protein belongs to the Ycf3 family.

The protein resides in the plastid. The protein localises to the chloroplast thylakoid membrane. Functionally, essential for the assembly of the photosystem I (PSI) complex. May act as a chaperone-like factor to guide the assembly of the PSI subunits. The protein is Photosystem I assembly protein Ycf3 of Chloranthus spicatus (Chulantree).